A 385-amino-acid polypeptide reads, in one-letter code: Glucose-fructose oxidoreductase domain-containing protein 2 (385 aa).

The N-terminal stretch at methionine 1–alanine 25 is a signal peptide.

It belongs to the Gfo/Idh/MocA family.

Its subcellular location is the secreted. It localises to the extracellular space. It is found in the extracellular matrix. In terms of biological role, promotes matrix assembly. The protein is Glucose-fructose oxidoreductase domain-containing protein 2 (GFOD2) of Bos taurus (Bovine).